Reading from the N-terminus, the 158-residue chain is Cell number regulator 11 (158 aa).

2 consecutive transmembrane segments (helical) span residues 49-67 (FGDL…VTFG) and 78-94 (TCCM…TIGW).

The protein belongs to the cornifelin family.

The protein localises to the membrane. This is Cell number regulator 11 (CNR11) from Zea mays (Maize).